We begin with the raw amino-acid sequence, 177 residues long: Adenine phosphoribosyltransferase (177 aa).

Belongs to the purine/pyrimidine phosphoribosyltransferase family. As to quaternary structure, homodimer.

Its subcellular location is the cytoplasm. The catalysed reaction is AMP + diphosphate = 5-phospho-alpha-D-ribose 1-diphosphate + adenine. It functions in the pathway purine metabolism; AMP biosynthesis via salvage pathway; AMP from adenine: step 1/1. Its function is as follows. Catalyzes a salvage reaction resulting in the formation of AMP, that is energically less costly than de novo synthesis. In Cutibacterium acnes (strain DSM 16379 / KPA171202) (Propionibacterium acnes), this protein is Adenine phosphoribosyltransferase.